A 120-amino-acid polypeptide reads, in one-letter code: Ribosome-binding factor A (120 aa).

Belongs to the RbfA family. As to quaternary structure, monomer. Binds 30S ribosomal subunits, but not 50S ribosomal subunits or 70S ribosomes.

The protein localises to the cytoplasm. Functionally, one of several proteins that assist in the late maturation steps of the functional core of the 30S ribosomal subunit. Associates with free 30S ribosomal subunits (but not with 30S subunits that are part of 70S ribosomes or polysomes). Required for efficient processing of 16S rRNA. May interact with the 5'-terminal helix region of 16S rRNA. The polypeptide is Ribosome-binding factor A (Chlamydia abortus (strain DSM 27085 / S26/3) (Chlamydophila abortus)).